The sequence spans 152 residues: Sec-independent protein translocase protein TatB (152 aa).

Residues 1–21 (MLDVGFGELFCFGIIALLVLG) traverse the membrane as a helical segment.

Belongs to the TatB family. The Tat system comprises two distinct complexes: a TatABC complex, containing multiple copies of TatA, TatB and TatC subunits, and a separate TatA complex, containing only TatA subunits. Substrates initially bind to the TatABC complex, which probably triggers association of the separate TatA complex to form the active translocon.

Its subcellular location is the cell inner membrane. Part of the twin-arginine translocation (Tat) system that transports large folded proteins containing a characteristic twin-arginine motif in their signal peptide across membranes. Together with TatC, TatB is part of a receptor directly interacting with Tat signal peptides. TatB may form an oligomeric binding site that transiently accommodates folded Tat precursor proteins before their translocation. This is Sec-independent protein translocase protein TatB from Acinetobacter baylyi (strain ATCC 33305 / BD413 / ADP1).